A 614-amino-acid chain; its full sequence is Vitamin B12 transporter BtuB (614 aa).

Positions 1-20 (MIKKASLLTACSVTAFSAWA) are cleaved as a signal peptide. The TonB box signature appears at 26-33 (DTLVVTAN). The 115-residue stretch at 38–152 (PRSTVLAPTT…IGGVVNIITT (115 aa)) folds into the TBDR plug domain. Residues leucine 83, serine 85, asparagine 92, and 110–111 (VS) contribute to the cyanocob(III)alamin site. The 460-residue stretch at 155–614 (EPGTEISAGW…EYTLSGSYTF (460 aa)) folds into the TBDR beta-barrel domain. The next 3 membrane-spanning stretches (beta stranded) occupy residues 158 to 165 (TEISAGWG), 169 to 178 (YQNYDVSTQQ), and 184 to 195 (TRVTLLGDYAHT). Positions 199, 211, 213, and 215 each coordinate Ca(2+). Beta stranded transmembrane passes span 217-227 (FLSKTLYGALE) and 232-248 (DAWS…NRTN). 2 residues coordinate Ca(2+): tyrosine 249 and aspartate 250. Alanine 251 serves as a coordination point for cyanocob(III)alamin. Aspartate 261 contributes to the Ca(2+) binding site. The next 14 beta stranded transmembrane spans lie at 263–277 (RKLY…LRYN), 279–296 (ELIK…KDYN), 309–325 (TLDE…NNII), 328–337 (HGNVGAGVDW), 353–369 (YDQR…QQVG), 371–381 (FTFEGAARSDD), 385–400 (FGRH…WEFI), 403–417 (YRFI…KAPN), 434–443 (KSKQWEGAFE), 449–458 (VNWRISGYRN), 473–490 (YYNE…TANF), 494–509 (PLTH…ARNA), 517–529 (RRAK…QLDW), and 535–550 (DWGI…YDKD). Threonine 309 serves as a coordination point for cyanocob(III)alamin. Arginine 517 contributes to the cyanocob(III)alamin binding site. Tyrosine 551 serves as a coordination point for cyanocob(III)alamin. 3 consecutive transmembrane segments (beta stranded) span residues 558–572 (TVKM…LAVA), 585–596 (IANLFDKDYETV), and 602–614 (AGRE…SYTF). Positions 597 to 614 (YGYQTAGREYTLSGSYTF) match the TonB C-terminal box motif.

The protein belongs to the TonB-dependent receptor family. BtuB (TC 1.B.14.3.1) subfamily.

The protein localises to the cell outer membrane. Functionally, involved in the active translocation of vitamin B12 (cyanocobalamin) across the outer membrane to the periplasmic space. It derives its energy for transport by interacting with the trans-periplasmic membrane protein TonB. The chain is Vitamin B12 transporter BtuB from Shigella dysenteriae serotype 1 (strain Sd197).